The sequence spans 471 residues: ATP synthase subunit beta (471 aa).

Residue 153-160 (GGAGVGKT) coordinates ATP.

The protein belongs to the ATPase alpha/beta chains family. F-type ATPases have 2 components, CF(1) - the catalytic core - and CF(0) - the membrane proton channel. CF(1) has five subunits: alpha(3), beta(3), gamma(1), delta(1), epsilon(1). CF(0) has four main subunits: a(1), b(1), b'(1) and c(9-12).

It localises to the cell membrane. The catalysed reaction is ATP + H2O + 4 H(+)(in) = ADP + phosphate + 5 H(+)(out). Functionally, produces ATP from ADP in the presence of a proton gradient across the membrane. The catalytic sites are hosted primarily by the beta subunits. The chain is ATP synthase subunit beta from Roseiflexus sp. (strain RS-1).